A 312-amino-acid polypeptide reads, in one-letter code: Aspartate carbamoyltransferase catalytic subunit (312 aa).

Carbamoyl phosphate contacts are provided by Arg55 and Thr56. Lys83 contributes to the L-aspartate binding site. Positions 105, 138, and 141 each coordinate carbamoyl phosphate. Residues Arg171 and Arg225 each coordinate L-aspartate. Residues Gly266 and Pro267 each coordinate carbamoyl phosphate.

This sequence belongs to the aspartate/ornithine carbamoyltransferase superfamily. ATCase family. In terms of assembly, heterododecamer (2C3:3R2) of six catalytic PyrB chains organized as two trimers (C3), and six regulatory PyrI chains organized as three dimers (R2).

The catalysed reaction is carbamoyl phosphate + L-aspartate = N-carbamoyl-L-aspartate + phosphate + H(+). The protein operates within pyrimidine metabolism; UMP biosynthesis via de novo pathway; (S)-dihydroorotate from bicarbonate: step 2/3. In terms of biological role, catalyzes the condensation of carbamoyl phosphate and aspartate to form carbamoyl aspartate and inorganic phosphate, the committed step in the de novo pyrimidine nucleotide biosynthesis pathway. The polypeptide is Aspartate carbamoyltransferase catalytic subunit (Corynebacterium glutamicum (strain R)).